The sequence spans 140 residues: Large ribosomal subunit protein bL17 (140 aa).

It belongs to the bacterial ribosomal protein bL17 family. As to quaternary structure, part of the 50S ribosomal subunit. Contacts protein L32.

This chain is Large ribosomal subunit protein bL17, found in Paramagnetospirillum magneticum (strain ATCC 700264 / AMB-1) (Magnetospirillum magneticum).